Reading from the N-terminus, the 122-residue chain is Large ribosomal subunit protein uL14c (122 aa).

Belongs to the universal ribosomal protein uL14 family. As to quaternary structure, part of the 50S ribosomal subunit.

It localises to the plastid. It is found in the chloroplast. In terms of biological role, binds to 23S rRNA. This is Large ribosomal subunit protein uL14c from Welwitschia mirabilis (Tree tumbo).